A 498-amino-acid polypeptide reads, in one-letter code: MCELFVCYKTSIMDLDKLYQLAVNNQFTDIILVLEDDKETIIIGAHKCILYASCPYFEKLFATTMKESIQSRINIRVPNSHVFCNIISGFYGQKIKSGNIEPWKYQLDTILCRDFLGLEITNSLLNDLIVPPENFDDLLKITELIGFDEFAFDLIIKNIPSDYDLTKLSNELLKCLHDHTISQKILFYNNELSVWQQLNIFNYKANDLNLPKDLPVPKSLKNSTYNFEYDLLAYLDNNKRLFVVNIHTNQLTYHIKNMPDTDSIKLISENNLFMVSNNKFAILDLETNQYNKSLEIDNTNFKYSYFCGDIYVCCYEYSIDLYNIVNLELIRTHKLDNKIISLTCSSDNTLIACVCENWNFNMWSIETGELIESATIDDKFTRKFIGINFKYDNNNVIIILNKNCIYQFDIKTGMSTYKTLGWNLSDVIDYSSITNNLILLRCNTNKKNKPDEPVSEDFFVMSNCLDFKYMNLNTNNPLFVQYYTNEVGRKIKSVLGKE.

In terms of domain architecture, BTB spans 28 to 99 (TDIILVLEDD…FYGQKIKSGN (72 aa)).

It belongs to the mimivirus BTB/WD family.

The polypeptide is Putative BTB/POZ domain-containing protein L788 (Acanthamoeba polyphaga (Amoeba)).